A 667-amino-acid polypeptide reads, in one-letter code: Probable potassium transport system protein Kup (667 aa).

Transmembrane regions (helical) follow at residues 16–36 (GFIIALGIVYGDIGTSPLYTM), 58–78 (VSLIIWTLTLVTTIKYVLIAL), 101–121 (WLIIPAMLGGATLLSDGALTP), 146–166 (TNVILTTLLILMVLFGLQRFG), 167–187 (TGVIGKLFGPVMLVWFSVLGI), 221–241 (IFILGSIFLATTGAEALYSDL), 253–273 (WPFVKVCIILSYCGQAAWILA), 294–314 (VYLVILATLAAIIASQALISG), 343–363 (LYIPVINWSLFAVTSCTVLYF), 373–393 (YGLAITITMLMTTILLAYYLI), 399–419 (PLLASLLMAFFAFIEFIFFLA), and 431–451 (VVVLALAIVFVMVIWHAGTVI).

This sequence belongs to the HAK/KUP transporter (TC 2.A.72) family.

It localises to the cell membrane. It catalyses the reaction K(+)(in) + H(+)(in) = K(+)(out) + H(+)(out). In terms of biological role, transport of potassium into the cell. Likely operates as a K(+):H(+) symporter. The chain is Probable potassium transport system protein Kup from Streptococcus equi subsp. zooepidemicus (strain H70).